A 156-amino-acid chain; its full sequence is Protein CROC-4 (156 aa).

A disordered region spans residues 46 to 71; sequence RATSSTTDSSRAPSSPRPPGSTSHCG. Low complexity predominate over residues 48–59; it reads TSSTTDSSRAPS.

In terms of tissue distribution, expressed throughout the brain in the thalamus, subthalamic nucleus, corpus callosum, hippocampus, substantia nigra, caudate nucleus, and amygdala.

It localises to the nucleus. Its function is as follows. May play a role in FOS signaling pathways involved in development and remodeling of neurons. Promotes transcription of the FOS promoter. In Homo sapiens (Human), this protein is Protein CROC-4.